The following is a 127-amino-acid chain: Large ribosomal subunit protein bL21c (127 aa).

It belongs to the bacterial ribosomal protein bL21 family. In terms of assembly, part of the 50S ribosomal subunit.

The protein resides in the plastid. It localises to the chloroplast. Its function is as follows. This protein binds to 23S rRNA. This Adiantum capillus-veneris (Maidenhair fern) protein is Large ribosomal subunit protein bL21c.